The primary structure comprises 92 residues: MGRSLKKGPFVSDSLLTKIEKLNEKGDKQVIKTWSRASTILPQMVGHTIAVHNGKQHVPVYVSEQMVGHKLGEFAPTRTFRGHAKSDKKSRR.

This sequence belongs to the universal ribosomal protein uS19 family.

In terms of biological role, protein S19 forms a complex with S13 that binds strongly to the 16S ribosomal RNA. The protein is Small ribosomal subunit protein uS19 of Rippkaea orientalis (strain PCC 8801 / RF-1) (Cyanothece sp. (strain PCC 8801)).